Consider the following 226-residue polypeptide: Ethylene-responsive transcription factor-like protein At4g13040 (226 aa).

2 disordered regions span residues Glu-63–Val-109 and Lys-195–Met-226. Over residues Pro-97 to Val-109 the composition is skewed to basic residues. The segment at residues Arg-105–Glu-171 is a DNA-binding region (AP2/ERF). Over residues Glu-217–Met-226 the composition is skewed to acidic residues.

The protein belongs to the AP2/ERF transcription factor family.

The protein resides in the nucleus. Functionally, probably acts as a transcriptional activator. Binds to the GCC-box pathogenesis-related promoter element. May be involved in the regulation of gene expression by stress factors and by components of stress signal transduction pathways. The chain is Ethylene-responsive transcription factor-like protein At4g13040 from Arabidopsis thaliana (Mouse-ear cress).